Reading from the N-terminus, the 482-residue chain is Ribosomal protein uS12 methylthiotransferase RimO (482 aa).

In terms of domain architecture, MTTase N-terminal spans 2-115; sequence MKVHIITLGC…IAEVVETFQP (114 aa). Positions 11, 47, 79, 177, 181, and 184 each coordinate [4Fe-4S] cluster. A Radical SAM core domain is found at 163 to 394; it reads RAVGPSAYLK…MRLQQRISRE (232 aa). In terms of domain architecture, TRAM spans 397 to 466; sequence RRWLGRVVRV…DYDLWGDVVG (70 aa).

Belongs to the methylthiotransferase family. RimO subfamily. It depends on [4Fe-4S] cluster as a cofactor.

It localises to the cytoplasm. The catalysed reaction is L-aspartate(89)-[ribosomal protein uS12]-hydrogen + (sulfur carrier)-SH + AH2 + 2 S-adenosyl-L-methionine = 3-methylsulfanyl-L-aspartate(89)-[ribosomal protein uS12]-hydrogen + (sulfur carrier)-H + 5'-deoxyadenosine + L-methionine + A + S-adenosyl-L-homocysteine + 2 H(+). In terms of biological role, catalyzes the methylthiolation of an aspartic acid residue of ribosomal protein uS12. This chain is Ribosomal protein uS12 methylthiotransferase RimO, found in Roseiflexus castenholzii (strain DSM 13941 / HLO8).